Consider the following 443-residue polypeptide: Oxygen-dependent coproporphyrinogen-III oxidase, mitochondrial (443 aa).

A mitochondrion-targeting transit peptide spans methionine 1–arginine 98. The segment at glutamate 89–leucine 112 is disordered. Residue serine 101 is modified to Phosphoserine. Residues glycine 103 to leucine 112 show a composition bias toward basic and acidic residues. Residues valine 182–lysine 191 form an important for dimerization region. Serine 233 is a binding site for coproporphyrinogen III. Histidine 247 (proton donor) is an active-site residue. Asparagine 249–arginine 251 is a coproporphyrinogen III binding site. Positions tyrosine 381–glutamate 417 are important for dimerization. Position 393 is an N6-acetyllysine; alternate (lysine 393). Lysine 393 is modified (N6-succinyllysine; alternate). A coproporphyrinogen III-binding site is contributed by glycine 400–arginine 402.

Belongs to the aerobic coproporphyrinogen-III oxidase family. In terms of assembly, homodimer. Expressed in erythroid cells. Expressed in liver.

It localises to the mitochondrion intermembrane space. It carries out the reaction coproporphyrinogen III + O2 + 2 H(+) = protoporphyrinogen IX + 2 CO2 + 2 H2O. The protein operates within porphyrin-containing compound metabolism; protoporphyrin-IX biosynthesis; protoporphyrinogen-IX from coproporphyrinogen-III (O2 route): step 1/1. In terms of biological role, involved in the heme biosynthesis. Catalyzes the aerobic oxidative decarboxylation of propionate groups of rings A and B of coproporphyrinogen-III to yield the vinyl groups in protoporphyrinogen-IX. The chain is Oxygen-dependent coproporphyrinogen-III oxidase, mitochondrial (Cpox) from Mus musculus (Mouse).